The chain runs to 436 residues: 3-ketoacyl-CoA thiolase (436 aa).

The Acyl-thioester intermediate role is filled by Cys-99. Residues His-392 and Cys-422 each act as proton acceptor in the active site.

This sequence belongs to the thiolase-like superfamily. Thiolase family. In terms of assembly, heterotetramer of two alpha chains (FadJ) and two beta chains (FadI).

The protein localises to the cytoplasm. The catalysed reaction is an acyl-CoA + acetyl-CoA = a 3-oxoacyl-CoA + CoA. It functions in the pathway lipid metabolism; fatty acid beta-oxidation. Catalyzes the final step of fatty acid oxidation in which acetyl-CoA is released and the CoA ester of a fatty acid two carbons shorter is formed. This chain is 3-ketoacyl-CoA thiolase, found in Shewanella oneidensis (strain ATCC 700550 / JCM 31522 / CIP 106686 / LMG 19005 / NCIMB 14063 / MR-1).